A 1488-amino-acid chain; its full sequence is WD repeat-containing protein 7 (1488 aa).

WD repeat units follow at residues 17-56 (APTH…EVNP), 62-104 (GHTA…CIEF), 156-199 (ISPD…SGLQ), 324-366 (VICP…DKQE), 404-443 (NEPL…IVQL), 462-507 (GHRN…MKHI), and 558-597 (RHLF…LDRC). Disordered stretches follow at residues 761 to 781 (EEED…PEYR) and 911 to 947 (GDHM…QGQI). The span at 768-781 (VMRQRREESDPEYR) shows a compositional bias: basic and acidic residues. Serine 935 carries the phosphoserine modification. The segment covering 937–947 (PASSNIVQGQI) has biased composition (polar residues). WD repeat units follow at residues 1349 to 1388 (PAIC…CQTI) and 1390 to 1430 (GHKG…LGSI). A Phosphoserine modification is found at serine 1454.

This chain is WD repeat-containing protein 7 (Wdr7), found in Rattus norvegicus (Rat).